Consider the following 111-residue polypeptide: Probable 4-amino-4-deoxy-L-arabinose-phosphoundecaprenol flippase subunit ArnE (111 aa).

3 helical membrane passes run 38–58 (LWLG…LLVL), 61–81 (LPVG…TLAA), and 91–111 (PRHW…GSAA). In terms of domain architecture, EamA spans 40 to 109 (LGLALICMGA…IISGIIILGS (70 aa)).

It belongs to the ArnE family. In terms of assembly, heterodimer of ArnE and ArnF.

The protein resides in the cell inner membrane. It functions in the pathway bacterial outer membrane biogenesis; lipopolysaccharide biosynthesis. In terms of biological role, translocates 4-amino-4-deoxy-L-arabinose-phosphoundecaprenol (alpha-L-Ara4N-phosphoundecaprenol) from the cytoplasmic to the periplasmic side of the inner membrane. The polypeptide is Probable 4-amino-4-deoxy-L-arabinose-phosphoundecaprenol flippase subunit ArnE (Salmonella heidelberg (strain SL476)).